The chain runs to 114 residues: Ig heavy chain V region (114 aa).

The region spanning 1-106 is the Ig-like domain; sequence EVQLQQSGAE…AVRVISRYFD (106 aa).

The polypeptide is Ig heavy chain V region (Mus musculus (Mouse)).